The sequence spans 85 residues: Protein AC4 (85 aa).

G2 carries N-myristoyl glycine; by host lipidation.

Belongs to the geminiviridae protein AC4/C4 family. Interacts with Arabidopsis thaliana ASK7/ASK-eta and ASK6/ASK-zeta proteins. In terms of processing, phosphorylated by Arabidopsis thaliana ASK7/ASK-eta mainly on threonine and serine residues.

The protein localises to the host cell membrane. Pathogenicity determinant. May act as a suppressor of RNA-mediated gene silencing, also known as post-transcriptional gene silencing (PTGS), a mechanism of plant viral defense that limits the accumulation of viral RNAs. May repress the AL61 promoter. In Solanum lycopersicum (Tomato), this protein is Protein AC4.